The chain runs to 882 residues: Translation initiation factor IF-2 (882 aa).

The interval 28 to 296 (GIRKSADDSV…LQQGFQKPAQ (269 aa)) is disordered. The span at 67–81 (STLNIPGTGGKSKSV) shows a compositional bias: polar residues. A compositionally biased stretch (basic and acidic residues) spans 92–209 (VKRDPQEAER…RMAEENKWTD (118 aa)). Positions 244 to 258 (GRGRNAKAARPKKGN) are enriched in basic residues. Residues 259-272 (KHAESKADREEARA) show a composition bias toward basic and acidic residues. Positions 381–550 (PRAPVVTIMG…LLQAEVLELK (170 aa)) constitute a tr-type G domain. A G1 region spans residues 390–397 (GHVDHGKT). 390-397 (GHVDHGKT) is a GTP binding site. The segment at 415-419 (GITQH) is G2. Positions 436 to 439 (DTPG) are G3. Residues 436–440 (DTPGH) and 490–493 (NKID) each bind GTP. The interval 490–493 (NKID) is G4. The interval 526-528 (SAK) is G5. Lys800 carries the post-translational modification N6-acetyllysine.

It belongs to the TRAFAC class translation factor GTPase superfamily. Classic translation factor GTPase family. IF-2 subfamily.

The protein resides in the cytoplasm. In terms of biological role, one of the essential components for the initiation of protein synthesis. Protects formylmethionyl-tRNA from spontaneous hydrolysis and promotes its binding to the 30S ribosomal subunits. Also involved in the hydrolysis of GTP during the formation of the 70S ribosomal complex. The protein is Translation initiation factor IF-2 of Shigella boydii serotype 4 (strain Sb227).